Here is a 227-residue protein sequence, read N- to C-terminus: PKHD-type hydroxylase Dtpsy_0528 (227 aa).

One can recognise a Fe2OG dioxygenase domain in the interval 78–178 (TIYPPKFNRY…RVASFFWIES (101 aa)). Fe cation-binding residues include histidine 96, aspartate 98, and histidine 159. Arginine 169 serves as a coordination point for 2-oxoglutarate.

Requires Fe(2+) as cofactor. It depends on L-ascorbate as a cofactor.

The protein is PKHD-type hydroxylase Dtpsy_0528 of Acidovorax ebreus (strain TPSY) (Diaphorobacter sp. (strain TPSY)).